Here is a 156-residue protein sequence, read N- to C-terminus: SsrA-binding protein (156 aa).

Belongs to the SmpB family.

The protein resides in the cytoplasm. In terms of biological role, required for rescue of stalled ribosomes mediated by trans-translation. Binds to transfer-messenger RNA (tmRNA), required for stable association of tmRNA with ribosomes. tmRNA and SmpB together mimic tRNA shape, replacing the anticodon stem-loop with SmpB. tmRNA is encoded by the ssrA gene; the 2 termini fold to resemble tRNA(Ala) and it encodes a 'tag peptide', a short internal open reading frame. During trans-translation Ala-aminoacylated tmRNA acts like a tRNA, entering the A-site of stalled ribosomes, displacing the stalled mRNA. The ribosome then switches to translate the ORF on the tmRNA; the nascent peptide is terminated with the 'tag peptide' encoded by the tmRNA and targeted for degradation. The ribosome is freed to recommence translation, which seems to be the essential function of trans-translation. In Bacillus pumilus (strain SAFR-032), this protein is SsrA-binding protein.